We begin with the raw amino-acid sequence, 179 residues long: uncharacterized protein (179 aa).

The interval 53 to 82 (SPEREDPESPTRGVDEVDGACSEPPTPRPE) is disordered. Residues 54–67 (PEREDPESPTRGVD) are compositionally biased toward basic and acidic residues.

This is an uncharacterized protein from Ictaluridae (bullhead catfishes).